A 245-amino-acid polypeptide reads, in one-letter code: 5-oxoprolinase subunit A (245 aa).

The protein belongs to the LamB/PxpA family. Forms a complex composed of PxpA, PxpB and PxpC.

The enzyme catalyses 5-oxo-L-proline + ATP + 2 H2O = L-glutamate + ADP + phosphate + H(+). Its function is as follows. Catalyzes the cleavage of 5-oxoproline to form L-glutamate coupled to the hydrolysis of ATP to ADP and inorganic phosphate. This chain is 5-oxoprolinase subunit A, found in Yersinia enterocolitica serotype O:8 / biotype 1B (strain NCTC 13174 / 8081).